Reading from the N-terminus, the 337-residue chain is Cytochrome P450 monooxygenase dpmpJ (337 aa).

A helical membrane pass occupies residues 4–24; the sequence is LILHHPYASLAAGILLYFFCL. An N-linked (GlcNAc...) asparagine glycan is attached at Asn158.

This sequence belongs to the cytochrome P450 family. Heme is required as a cofactor.

The protein localises to the membrane. It participates in secondary metabolite biosynthesis; terpenoid biosynthesis. Functionally, cytochrome P450 monooxygenase; part of the gene cluster that mediates the biosynthesis of diterpenoid pyrones. The first step of the pathway is the synthesis of the alpha-pyrone moiety by the polyketide synthase dpmpA via condensation of one acetyl-CoA starter unit with 3 malonyl-CoA units and 2 methylations. The alpha-pyrone is then combined with geranylgeranyl pyrophosphate (GGPP) formed by the GGPP synthase dpmpD through the action of the prenyltransferase dpmpC to yield a linear alpha-pyrone diterpenoid. Subsequent steps in the diterpenoid pyrone biosynthetic pathway involve the decalin core formation, which is initiated by the epoxidation of the C10-C11 olefin by the FAD-dependent oxidoreductase dpmpE, and is followed by a cyclization cascade catalyzed by the terpene cyclase dpmpB. The short chain dehydrogenase/reductase dpmpG then oxidizes the 8S hydroxy group to a ketone and the short chain dehydrogenase/reductase dpmpH reduces the ketone to the 8R hydroxy group to yield higginsianin B. Higginsianin B is further methylated by the methyltransferase dpmpI to produce the intermediate named FDDP B. The cytochrome P450 monooxygenase dpmpJ then oxidizes the C-26 methyl to primary alcohol, producing the final diterpenoid pyrone with a C-26 primary alcohol on the gamma-pyrone moiety named FDDP C. This is Cytochrome P450 monooxygenase dpmpJ from Macrophomina phaseolina (strain MS6) (Charcoal rot fungus).